Here is a 506-residue protein sequence, read N- to C-terminus: MTVYNINLGIGWASSGVEYAQAYRAQILRRIQQPAKFIFMDMILADNIQHLTENIGFLDEEIIWLYNYFTDIKIAPTTVTLDQVLAQVAGQPERSEKEGKIVRYFYPQDDQFITCYLRQEDQDSVEHVEYVSRGRLIRKDYFSYVRYASEYFAPHNDAATLYQRRFYHEDGSVAYDMLIEDGQEKLYRFPDRIFYSKAELVRYFLQCLQLQADDVVILDRETGIGQVVFEESQKAKLGVVVHAEHFSENASSDDYILWNNFYDYQFTNADKVDFFIVATEAQKRILEQQFQHYSDKQPQIATIPVGSLDQLTYPKEPRKPYSMITASRLATEKHIDWLVAATVQAHAQLPELTLDIYGKGSEEDKLRRRIEEAGAQDYIRLKGHADLSQIYAGYELYLTASTSEGFGLTLMEAVGSGLPLIGFDVRYGNQTFIDDGKNGYLLPVSSNHVEDQIIAAFVEKIIALFSQGRQQEMSQHSYQVAENYLTSRVEAAWTQLLKEVRDDSAL.

An N-terminus R-fold-1 region spans residues 1 to 78 (MTVYNINLGI…FTDIKIAPTT (78 aa)). 16–19 (GVEY) serves as a coordination point for UDP. The tract at residues 79–195 (VTLDQVLAQV…LYRFPDRIFY (117 aa)) is extended beta-sheet domain. The tract at residues 196-306 (SKAELVRYFL…QPQIATIPVG (111 aa)) is C-terminus R-fold-1. Histidine 242 lines the N-acetyl-D-glucosamine pocket. Positions 307–506 (SLDQLTYPKE…LKEVRDDSAL (200 aa)) are R-fold-2. Residues arginine 328, tyrosine 357, and 383 to 385 (GHA) each bind UDP. Position 405 to 407 (405 to 407 (GFG)) interacts with N-acetyl-D-glucosamine. UDP is bound at residue threonine 409.

The protein belongs to the glycosyltransferase group 1 family. Glycosyltransferase 4 subfamily. Forms a heterotetramer with 2 subunits each of GtfA and GtfB. Part of the accessory SecA2/SecY2 protein translocation apparatus required to export cell wall protein GspB.

The protein resides in the cytoplasm. The protein localises to the cell membrane. The enzyme catalyses L-seryl-[protein] + UDP-N-acetyl-alpha-D-glucosamine = 3-O-[N-acetyl-alpha-D-glucosaminyl]-L-seryl-[protein] + UDP + H(+). It functions in the pathway protein modification; protein glycosylation. In terms of biological role, required for polymorphic O-glycosylation of GspB, a serine-rich repeat cell wall protein encoded upstream in the same operon. Catalyzes the first step in glycosylation by transferring N-acetylglucosamine from UDP-GlcNAc to serine residues in GspB. Part of the accessory SecA2/SecY2 system specifically required to export GspB. Upon coexpression in E.coli with GtfB glycosylates GspB constructs. Glycosylation probably occurs intracellularly. Requires GtfB for glycosylation activity, it has no activity alone. Does not use UDP-glucose as substrate. Has a fast, probably processive glycosylation phase followed by a slower, non-processive phase. The enzyme probably modifies its tertiary conformation by opening and closing its intersubunit interfaces to accomodate the increasingly glycosylated substrate; protein substrate recognition is provided by GtfB. The chain is UDP-N-acetylglucosamine--peptide N-acetylglucosaminyltransferase GtfA subunit from Streptococcus gordonii.